Here is a 211-residue protein sequence, read N- to C-terminus: Pyridoxine/pyridoxamine 5'-phosphate oxidase (211 aa).

Substrate-binding positions include 8–11 and Lys66; that span reads RRDY. Residues 61 to 66, 76 to 77, Arg82, Lys83, and Gln105 contribute to the FMN site; these read RLVLLK and FT. Positions 123, 127, and 131 each coordinate substrate. Residues 140-141 and Trp184 contribute to the FMN site; that span reads QS. 190–192 serves as a coordination point for substrate; the sequence is RLH. Position 194 (Arg194) interacts with FMN.

It belongs to the pyridoxamine 5'-phosphate oxidase family. In terms of assembly, homodimer. FMN serves as cofactor.

The catalysed reaction is pyridoxamine 5'-phosphate + O2 + H2O = pyridoxal 5'-phosphate + H2O2 + NH4(+). It catalyses the reaction pyridoxine 5'-phosphate + O2 = pyridoxal 5'-phosphate + H2O2. The protein operates within cofactor metabolism; pyridoxal 5'-phosphate salvage; pyridoxal 5'-phosphate from pyridoxamine 5'-phosphate: step 1/1. It participates in cofactor metabolism; pyridoxal 5'-phosphate salvage; pyridoxal 5'-phosphate from pyridoxine 5'-phosphate: step 1/1. Its function is as follows. Catalyzes the oxidation of either pyridoxine 5'-phosphate (PNP) or pyridoxamine 5'-phosphate (PMP) into pyridoxal 5'-phosphate (PLP). This Thermosynechococcus vestitus (strain NIES-2133 / IAM M-273 / BP-1) protein is Pyridoxine/pyridoxamine 5'-phosphate oxidase.